A 159-amino-acid polypeptide reads, in one-letter code: Succinate dehydrogenase [ubiquinone] cytochrome b small subunit, mitochondrial (159 aa).

The transit peptide at 1–56 directs the protein to the mitochondrion; the sequence is MAVLLKLGVLCSGQGARALSLRSRAVRPAFVSAFLQDQPTPGWRGTQHIHLSPSHQ. Over 57 to 63 the chain is Mitochondrial matrix; the sequence is SGSKAAS. Residues 64–85 traverse the membrane as a helical segment; that stretch reads LHWTSERVVSVLLLGLIPAGYL. Residues 86-90 are Mitochondrial intermembrane-facing; it reads NPCSV. Residues 91–111 form a helical membrane-spanning segment; it reads VDYSLAAALTLHSHWGIGQVV. Histidine 102 contributes to the heme b binding site. Residues 112 to 120 lie on the Mitochondrial matrix side of the membrane; it reads TDYVHGDAL. Tyrosine 114 is an a ubiquinone binding site. A helical membrane pass occupies residues 121 to 142; the sequence is QKATKAGLLAVSALTFAGLCYF. Residues 143 to 159 lie on the Mitochondrial intermembrane side of the membrane; sequence NYHDVGICRAVAMLWKL.

The protein belongs to the CybS family. As to quaternary structure, component of complex II composed of four subunits: the flavoprotein (FP) SDHA, iron-sulfur protein (IP) SDHB, and a cytochrome b560 composed of SDHC and SDHD.

It localises to the mitochondrion inner membrane. It participates in carbohydrate metabolism; tricarboxylic acid cycle. Functionally, membrane-anchoring subunit of succinate dehydrogenase (SDH) that is involved in complex II of the mitochondrial electron transport chain and is responsible for transferring electrons from succinate to ubiquinone (coenzyme Q). SDH also oxidizes malate to the non-canonical enol form of oxaloacetate, enol-oxaloacetate. Enol-oxaloacetate, which is a potent inhibitor of the succinate dehydrogenase activity, is further isomerized into keto-oxaloacetate. The chain is Succinate dehydrogenase [ubiquinone] cytochrome b small subunit, mitochondrial (Sdhd) from Rattus norvegicus (Rat).